Here is a 179-residue protein sequence, read N- to C-terminus: Inner membrane-spanning protein YciB (179 aa).

Helical transmembrane passes span 3–23 (FLFD…FGIY), 49–69 (PMQW…ILLH), 76–96 (WKPT…VIGW), 121–141 (VAWA…AYQF), and 149–169 (FKLF…SIWL).

The protein belongs to the YciB family.

The protein localises to the cell inner membrane. Plays a role in cell envelope biogenesis, maintenance of cell envelope integrity and membrane homeostasis. The chain is Inner membrane-spanning protein YciB from Cupriavidus metallidurans (strain ATCC 43123 / DSM 2839 / NBRC 102507 / CH34) (Ralstonia metallidurans).